The sequence spans 123 residues: Basic myotoxic phospholipase A2 PhTX-II (123 aa).

7 cysteine pairs are disulfide-bonded: Cys26-Cys116, Cys28-Cys45, Cys44-Cys95, Cys50-Cys123, Cys51-Cys88, Cys58-Cys81, and Cys75-Cys86. Positions 27, 29, and 31 each coordinate Ca(2+). Residue His48 is part of the active site. Residue Asp49 participates in Ca(2+) binding. Asp89 is an active-site residue.

As to quaternary structure, monomer. It depends on Ca(2+) as a cofactor. In terms of tissue distribution, expressed by the venom gland.

It is found in the secreted. The enzyme catalyses a 1,2-diacyl-sn-glycero-3-phosphocholine + H2O = a 1-acyl-sn-glycero-3-phosphocholine + a fatty acid + H(+). P-bromophenacyl bromide (BPB) completely inhibits the catalytic and edematogenic activities. Enzymatic activity is also diminished by EDTA, heparin and crotapotins F2 and F3 from C.d.collilineatus. Inhibited by divalent cations different from calcium ions (cadmium, magnesium, manganese, zinc), since they act as competitive antagonists of this cofactor. Snake venom phospholipase A2 (PLA2) that induces myotoxicity and local edema in mice. In addition, it causes neuromuscular blockade in avian neuromuscular preparations with a significant direct action on skeletal muscle function. Myotoxic action is exerted by both enzymatic and non-enzymatic mechanisms. PLA2 catalyzes the calcium-dependent hydrolysis of the 2-acyl groups in 3-sn-phosphoglycerides. The polypeptide is Basic myotoxic phospholipase A2 PhTX-II (Bothrocophias hyoprora (Amazonian hognose viper)).